The following is a 93-amino-acid chain: UPF0473 protein BH1270 (93 aa).

This sequence belongs to the UPF0473 family.

The protein is UPF0473 protein BH1270 of Halalkalibacterium halodurans (strain ATCC BAA-125 / DSM 18197 / FERM 7344 / JCM 9153 / C-125) (Bacillus halodurans).